The chain runs to 608 residues: Kelch-like protein 10 (608 aa).

One can recognise a BTB domain in the interval 39-106 (CDVVIKVNGF…AYTRTVPITP (68 aa)). Kelch repeat units lie at residues 292–339 (ILFA…YLKG), 340–386 (YVYI…VLSN), 388–433 (IYAM…TLYG), 434–480 (KVYI…AYGE), 481–527 (HVYA…VVDD), and 529–574 (LFVV…VVPG). Ser-501 carries the post-translational modification Phosphoserine.

Self-associates. Interacts with CUL3; indicative for the participation in an E3 ubiquitin ligase complex. Testis specific.

The protein localises to the cytoplasm. It participates in protein modification; protein ubiquitination. Functionally, may be a substrate-specific adapter of a CUL3-based E3 ubiquitin-protein ligase complex which mediates the ubiquitination and subsequent proteasomal degradation of target proteins during spermatogenesis. Required for male fertility. This chain is Kelch-like protein 10 (Klhl10), found in Mus musculus (Mouse).